The following is a 358-amino-acid chain: Replication-associated protein (358 aa).

A CRESS-DNA virus Rep endonuclease domain is found at 7–115 (RVQAKNVFLT…DGDTVEWGQF (109 aa)). The RCR-1 motif lies at 14-17 (FLTY). A divalent metal cation contacts are provided by E48, H56, and H58. Positions 56-58 (HLH) match the RCR-2 motif. Y102 serves as the catalytic For DNA cleavage activity. The RCR-3 motif lies at 102–105 (YLDK). Residue D106 coordinates a divalent metal cation. A binding to RBR1 region spans residues 142–152 (KSEALNVIREL). An oligomerization region spans residues 155 to 175 (KDFVLQFHNLNSNLDRIFQEP). 220 to 227 (GDSRTGKT) provides a ligand contact to ATP.

Belongs to the geminiviridae Rep protein family. Homooligomer. Interacts with the replication enhancer protein (REn). Interacts with host retinoblastoma-related protein 1 (RBR1), and may thereby induce the transcription of host replicative enzymes even if the cell is not dividing anymore. Interacts with host PCNA. Interacts with host SCE1 protein. It depends on Mg(2+) as a cofactor. Requires Mn(2+) as cofactor.

It is found in the host nucleus. Its function is as follows. Essential for the replication of viral ssDNA. The closed circular ssDNA genome is first converted to a superhelical dsDNA. Rep binds a specific region at the genome origin of replication. It introduces an endonucleolytic nick within the conserved sequence 5'-TAATATTAC-3' in the intergenic region of the genome present in all geminiviruses, thereby initiating the rolling circle replication (RCR). Following cleavage, binds covalently to the 5'-phosphate of DNA as a tyrosyl ester. The cleavage gives rise to a free 3'-OH that serves as a primer for the cellular DNA polymerase. The polymerase synthesizes the (+) strand DNA by rolling circle mechanism. After one round of replication, a Rep-catalyzed nucleotidyl transfer reaction releases a circular single-stranded virus genome, thereby terminating the replication. Displays origin-specific DNA cleavage, nucleotidyl transferase, ATPase and helicase activities. The protein is Replication-associated protein of Hewittia sublobata (Coralbush).